The following is a 62-amino-acid chain: Endoregulin (62 aa).

The chain crosses the membrane as a helical span at residues 25-45; that stretch reads LAVIILFITAVLLLILFAIVF.

Homooligomer. Can also form heterooligomers with other sarcoplasmic/endoplasmic reticulum calcium ATPase (SERCA) regulators ARLN, PLN, SLN and STRIT1/DWORF. Monomer. Interacts as a monomer with ATP2A2/SERCA2; the interaction results in inhibition of ATP2A2 Ca(2+) affinity.

It is found in the endoplasmic reticulum membrane. In terms of biological role, inhibits the activity of the calcium ATPases ATP2A2/SERCA2 and ATP2A3/SERCA3 by decreasing their apparent affinity for Ca(2+). The chain is Endoregulin from Homo sapiens (Human).